We begin with the raw amino-acid sequence, 207 residues long: Guanylate kinase (207 aa).

The region spanning 5 to 183 (GTLYIISAPS…ALYELEAIVE (179 aa)) is the Guanylate kinase-like domain. 12 to 19 (APSGAGKT) lines the ATP pocket.

The protein belongs to the guanylate kinase family.

The protein resides in the cytoplasm. It carries out the reaction GMP + ATP = GDP + ADP. Its function is as follows. Essential for recycling GMP and indirectly, cGMP. In Alcanivorax borkumensis (strain ATCC 700651 / DSM 11573 / NCIMB 13689 / SK2), this protein is Guanylate kinase.